We begin with the raw amino-acid sequence, 672 residues long: Putative per-hexamer repeat protein 5 (672 aa).

7 stretches are compositionally biased toward gly residues: residues 141-161 (TGTG…GTGT), 171-191 (TDRG…GTGT), 215-233 (TGTG…GTDT), 243-263 (TGTG…GTGT), 273-295 (TDRG…GTGT), 303-355 (TGTG…GSGS), and 365-389 (TGTG…GSGS). 2 disordered regions span residues 141-193 (TGTG…GTGT) and 213-672 (TGTG…TGTA). A compositionally biased stretch (low complexity) spans 390 to 424 (GTAKVTGTATTTATVTETGTAKVTGTDTGTAKVTG). The segment covering 425–469 (TGTGTGTGTGTGTGTGTGTGTGTGTGTGTGTGTGTGTGTGTGSGS) has biased composition (gly residues). Residues 470–486 (GTAKVTGTDTGTAKVTG) are compositionally biased toward low complexity. A compositionally biased stretch (gly residues) spans 487 to 537 (TGTGTGTGTGTGTGTGTGTGTGTGSGSGSGSGSGSGSGTGTGTGLGSGSGS). The span at 538-552 (GTAKVTGTGTAKVTG) shows a compositional bias: low complexity. The span at 553–617 (TGTGTGTGTG…GTGTGTGTGT (65 aa)) shows a compositional bias: gly residues. The segment covering 618–636 (GTSTVTVRGTGTGTATATG) has biased composition (low complexity). Composition is skewed to gly residues over residues 637 to 653 (TGTG…GTGT) and 663 to 672 (RGTGTGTGTA).

The polypeptide is Putative per-hexamer repeat protein 5 (Phxr5) (Mus musculus (Mouse)).